The chain runs to 501 residues: Cobyric acid synthase (501 aa).

The GATase cobBQ-type domain occupies 253–450 (EIEIAVLKLP…LHGIFENGRW (198 aa)). The Nucleophile role is filled by cysteine 334. Histidine 442 is an active-site residue.

The protein belongs to the CobB/CobQ family. CobQ subfamily.

It functions in the pathway cofactor biosynthesis; adenosylcobalamin biosynthesis. In terms of biological role, catalyzes amidations at positions B, D, E, and G on adenosylcobyrinic A,C-diamide. NH(2) groups are provided by glutamine, and one molecule of ATP is hydrogenolyzed for each amidation. The polypeptide is Cobyric acid synthase (Prochlorococcus marinus (strain MIT 9313)).